A 552-amino-acid chain; its full sequence is Methyl-coenzyme M reductase II subunit alpha (552 aa).

Gln-150 serves as a coordination point for coenzyme F430. Coenzyme B contacts are provided by residues Arg-228, 259-260 (KH), and Arg-273. Coenzyme M is bound by residues Tyr-335 and Tyr-446.

This sequence belongs to the methyl-coenzyme M reductase alpha subunit family. In terms of assembly, MCR is a hexamer of two alpha, two beta, and two gamma chains, forming a dimer of heterotrimers. Coenzyme F430 serves as cofactor.

It catalyses the reaction coenzyme B + methyl-coenzyme M = methane + coenzyme M-coenzyme B heterodisulfide. The protein operates within one-carbon metabolism; methyl-coenzyme M reduction; methane from methyl-coenzyme M: step 1/1. Component of the methyl-coenzyme M reductase (MCR) I that catalyzes the reductive cleavage of methyl-coenzyme M (CoM-S-CH3 or 2-(methylthio)ethanesulfonate) using coenzyme B (CoB or 7-mercaptoheptanoylthreonine phosphate) as reductant which results in the production of methane and the mixed heterodisulfide of CoB and CoM (CoM-S-S-CoB). This is the final step in methanogenesis. The protein is Methyl-coenzyme M reductase II subunit alpha (mrtA) of Methanocaldococcus jannaschii (strain ATCC 43067 / DSM 2661 / JAL-1 / JCM 10045 / NBRC 100440) (Methanococcus jannaschii).